The sequence spans 430 residues: Dihydrofolate synthase/folylpolyglutamate synthase (430 aa).

51-54 serves as a coordination point for ATP; it reads GKGS. Mg(2+) is bound at residue serine 75. Residue 114-117 participates in 7,8-dihydropteroate binding; sequence TEYG. A Mg(2+)-binding site is contributed by glutamate 145. 152-154 contacts 7,8-dihydropteroate; it reads FDS. Histidine 172 contacts Mg(2+). The ATP site is built by glutamine 263, arginine 302, and aspartate 315.

This sequence belongs to the folylpolyglutamate synthase family. As to quaternary structure, monomer. The cofactor is Mg(2+).

It catalyses the reaction 7,8-dihydropteroate + L-glutamate + ATP = 7,8-dihydrofolate + ADP + phosphate + H(+). The enzyme catalyses (6S)-5,6,7,8-tetrahydrofolyl-(gamma-L-Glu)(n) + L-glutamate + ATP = (6S)-5,6,7,8-tetrahydrofolyl-(gamma-L-Glu)(n+1) + ADP + phosphate + H(+). Its pathway is cofactor biosynthesis; tetrahydrofolate biosynthesis; 7,8-dihydrofolate from 2-amino-4-hydroxy-6-hydroxymethyl-7,8-dihydropteridine diphosphate and 4-aminobenzoate: step 2/2. It participates in cofactor biosynthesis; tetrahydrofolylpolyglutamate biosynthesis. Functions in two distinct reactions of the de novo folate biosynthetic pathway. Catalyzes the addition of a glutamate residue to dihydropteroate (7,8-dihydropteroate or H2Pte) to form dihydrofolate (7,8-dihydrofolate monoglutamate or H2Pte-Glu). Also catalyzes successive additions of L-glutamate to tetrahydrofolate, leading to folylpolyglutamate derivatives. The polypeptide is Dihydrofolate synthase/folylpolyglutamate synthase (folC) (Bacillus subtilis (strain 168)).